Reading from the N-terminus, the 469-residue chain is Cytosolic beta-glucosidase (469 aa).

Substrate contacts are provided by Gln-17, His-120, and Asn-164. The active-site Proton donor is Glu-165. Tyr-309 contacts substrate. Glu-373 functions as the Nucleophile in the catalytic mechanism. Substrate contacts are provided by residues Trp-417 and 424–425; that span reads EW.

This sequence belongs to the glycosyl hydrolase 1 family. Klotho subfamily. Post-translationally, the N-terminus is blocked. As to expression, present in hepatocytes (at protein level).

The protein localises to the cytoplasm. The protein resides in the cytosol. The enzyme catalyses Hydrolysis of terminal, non-reducing beta-D-glucosyl residues with release of beta-D-glucose.. The catalysed reaction is a beta-D-glucosyl-(1&lt;-&gt;1')-N-acylsphing-4-enine + H2O = an N-acylsphing-4-enine + D-glucose. It carries out the reaction a beta-D-galactosyl-(1&lt;-&gt;1')-N-acylsphing-4-enine + H2O = an N-acylsphing-4-enine + D-galactose. It catalyses the reaction beta-D-glucosyl-(1&lt;-&gt;1)-sphing-4-enine + H2O = sphing-4-enine + D-glucose. The enzyme catalyses beta-D-glucosyl-(1&lt;-&gt;1)-N-octadecanoylsphing-4-enine + H2O = N-octadecanoylsphing-4-enine + D-glucose. The catalysed reaction is beta-D-galactosyl-(1&lt;-&gt;1)-sphing-4-enine + H2O = sphing-4-enine + D-galactose. It carries out the reaction beta-D-galactosyl-(1&lt;-&gt;1')-N-octadecanoylsphing-4-enine + H2O = N-octadecanoylsphing-4-enine + D-galactose. It catalyses the reaction a beta-D-xylosyl-(1&lt;-&gt;1')-N-acylsphing-4-enine + cholesterol = cholesteryl 3-beta-D-xyloside + an N-acylsphing-4-enine. Inhibited by 2,4-dinitrophenyl-2-fluoro-2-deoxy-beta-D-glucopyranoside. In terms of biological role, neutral cytosolic beta-glycosidase with a broad substrate specificity that could play a role in the catabolism of glycosylceramides. Has a significant glucosylceramidase activity in vitro. However, that activity is relatively low and its significance in vivo is not clear. Hydrolyzes galactosylceramide/GalCer, glucosylsphingosine/GlcSph and galactosylsphingosine/GalSph. However, the in vivo relevance of these activities is unclear. It can also hydrolyze a broad variety of dietary glycosides including phytoestrogens, flavonols, flavones, flavanones and cyanogens in vitro and could therefore play a role in the metabolism of xenobiotics. Possesses transxylosylase activity in vitro using xylosylated ceramides/XylCers (such as beta-D-xylosyl-(1&lt;-&gt;1')-N-acylsphing-4-enine) as xylosyl donors and cholesterol as acceptor. Could also play a role in the catabolism of cytosolic sialyl free N-glycans. The sequence is that of Cytosolic beta-glucosidase from Cavia porcellus (Guinea pig).